Reading from the N-terminus, the 236-residue chain is Small ribosomal subunit protein uS5 (236 aa).

The segment covering 1 to 10 (MTENNEKDIQ) has biased composition (basic and acidic residues). Positions 1 to 64 (MTENNEKDIQ…GRDGGREAEK (64 aa)) are disordered. A compositionally biased stretch (low complexity) spans 11 to 27 (VTEAVAAPATETAAPAT). The segment covering 28–64 (TDDRRGGARRGERGDRGQGRGDRGGRGGRDGGREAEK) has biased composition (basic and acidic residues). Residues 67–130 (FVERVVTINR…EEAKKSFFRV (64 aa)) form the S5 DRBM domain.

It belongs to the universal ribosomal protein uS5 family. Part of the 30S ribosomal subunit. Contacts proteins S4 and S8.

In terms of biological role, with S4 and S12 plays an important role in translational accuracy. Located at the back of the 30S subunit body where it stabilizes the conformation of the head with respect to the body. The protein is Small ribosomal subunit protein uS5 of Arthrobacter sp. (strain FB24).